Here is a 739-residue protein sequence, read N- to C-terminus: Catalase-peroxidase (739 aa).

A cross-link (tryptophyl-tyrosyl-methioninium (Trp-Tyr) (with M-253)) is located at residues 99–227 (WHSAGTYRMG…LAAVQMGLIY (129 aa)). Residue His100 is the Proton acceptor of the active site. Positions 227–253 (YVNPEGPDGNPDPVASGRDVRETFARM) form a cross-link, tryptophyl-tyrosyl-methioninium (Tyr-Met) (with W-99). His268 provides a ligand contact to heme b.

It belongs to the peroxidase family. Peroxidase/catalase subfamily. As to quaternary structure, homodimer or homotetramer. Heme b is required as a cofactor. In terms of processing, formation of the three residue Trp-Tyr-Met cross-link is important for the catalase, but not the peroxidase activity of the enzyme.

It carries out the reaction H2O2 + AH2 = A + 2 H2O. The enzyme catalyses 2 H2O2 = O2 + 2 H2O. Its function is as follows. Bifunctional enzyme with both catalase and broad-spectrum peroxidase activity. The sequence is that of Catalase-peroxidase from Syntrophotalea carbinolica (strain DSM 2380 / NBRC 103641 / GraBd1) (Pelobacter carbinolicus).